The following is a 184-amino-acid chain: Protein PLANT CADMIUM RESISTANCE 4 (184 aa).

Over residues 1-10 the composition is skewed to polar residues; the sequence is MGRPGSQPNE. Residues 1–21 are disordered; that stretch reads MGRPGSQPNEAQPPPVQVQPT. Residues 96–116 traverse the membrane as a helical segment; that stretch reads GGLLYGMIFFIGVPFVYSCMF.

The protein belongs to the cornifelin family.

The protein resides in the membrane. May be involved in heavy metals transport. This chain is Protein PLANT CADMIUM RESISTANCE 4 (PCR4), found in Arabidopsis thaliana (Mouse-ear cress).